The following is a 519-amino-acid chain: Chaperone SurA (519 aa).

The N-terminal stretch at 1 to 31 is a signal peptide; it reads MMRSLHSLRRMSGTVLALMLAAGLPLSAAQA. Composition is skewed to low complexity over residues 31 to 45 and 197 to 207; these read AQPAKPAPKGDQKPA and PAAAQATRAPA. 2 disordered regions span residues 31-50 and 196-221; these read AQPAKPAPKGDQKPATPAPS and NPAAAQATRAPAPQQPQPQPRQPAQS. The PpiC 1 domain occupies 223–324; that stretch reads PAMLVLAQIL…NGFHILKVVD (102 aa). Residues 328 to 361 are disordered; the sequence is GGQPAQAARPAPAPAPQQPSSFQEGPSVAAPQGP. A PpiC 2 domain is found at 364 to 463; the sequence is VTQTHARHIL…FGWHLIQVLE (100 aa).

Its subcellular location is the periplasm. The catalysed reaction is [protein]-peptidylproline (omega=180) = [protein]-peptidylproline (omega=0). Chaperone involved in the correct folding and assembly of outer membrane proteins. Recognizes specific patterns of aromatic residues and the orientation of their side chains, which are found more frequently in integral outer membrane proteins. May act in both early periplasmic and late outer membrane-associated steps of protein maturation. The sequence is that of Chaperone SurA from Bordetella bronchiseptica (strain ATCC BAA-588 / NCTC 13252 / RB50) (Alcaligenes bronchisepticus).